The chain runs to 738 residues: MVWLLFLSSFCFADEVVEIRISGNKRVSETTVRGLLHVEVGQDVASDELNAVFKRLTASRLFSSVELDLTAGILEVKLQENPILRNVVVKGNKLLSRAAIDKILVYKKDAIFDVHEFENSITALKSYYRDSVVEKTAISYRIVPIDENNVDVEVTVKEAKPTVIRAIEFEGNTTYSDRVLKHVIRSREKSILRLFGTAHYYSREKLEFDKDLLADFYQGKGYFDYALEGLEERENEDGVVLVFKLKEGARYSFGRVSVVSEKGEIEISDLKEKVRIREGAVFNIGAVRENALTLLSVLNERGHMFVNVVPEYHPDANGRVDLTYHVVSTKKYRIRKINISGNTRTKDTVIRREMLLSENDLYQPSKVADSRRRILNLGFFDEVYIEEHKIDGQNLILEVRVKERPTGTLNLSGGYGSDVGFFGNFSFVENNLFGTSDRLVVELQKASLGSNYSMEFQRKRIFDTFITAGASVFYKNRNEKANGLYKFSSVGGDGSVSYSLRDDLRLHLGYSLSFDKIFDVEGDAPESVKSSAGTKILSAVSYSLFLNKLDNYFVPRYGYGVRFGNKFAGIGGDVKFLRSDFKAGGFVSVFDQSAVLSLIVRAGNIFGYSGQGVDVANRFFLNEMRGFDNLGIGPRDVETDDALGGNFFILGTAEVQVPMRLPVELDLKAAFFYEVGTLTGVDVTTEKVYDSHALRSSVGAGLVWNSPFGVLRVDVAKALVEGKGDKVKTVKFGIVSPF.

Residues 1–13 form the signal peptide; that stretch reads MVWLLFLSSFCFA. 5 POTRA domains span residues 14–81, 82–159, 162–248, 251–329, and 332–404; these read DEVV…LQEN, PILR…VKEA, TVIR…LKEG, YSFG…VVST, and YRIR…VKER.

This sequence belongs to the BamA family. As to quaternary structure, part of the Bam complex.

The protein resides in the cell outer membrane. Part of the outer membrane protein assembly complex, which is involved in assembly and insertion of beta-barrel proteins into the outer membrane. The chain is Outer membrane protein assembly factor BamA from Neorickettsia risticii (strain Illinois).